Here is a 561-residue protein sequence, read N- to C-terminus: BTB/POZ domain-containing protein At2g46260 (561 aa).

Disordered stretches follow at residues 1–31 and 100–119; these read MRGS…EGDF and LTDN…NLDD. Positions 17 to 28 are enriched in polar residues; that stretch reads DSNFSRHGSSSE. The segment covering 107 to 119 has biased composition (acidic residues); that stretch reads DMDDAPGGDNLDD. The 70-residue stretch at 143-212 folds into the BTB domain; sequence IDCSTVVRVK…MYSNSLSVTT (70 aa). A BACK domain is found at 266-358; sequence QPLTDAAKQF…YMTCRKLKKV (93 aa).

It participates in protein modification; protein ubiquitination. In terms of biological role, may act as a substrate-specific adapter of an E3 ubiquitin-protein ligase complex (CUL3-RBX1-BTB) which mediates the ubiquitination and subsequent proteasomal degradation of target proteins. This chain is BTB/POZ domain-containing protein At2g46260, found in Arabidopsis thaliana (Mouse-ear cress).